The chain runs to 283 residues: 2-dehydro-3-deoxyphosphooctonate aldolase (283 aa).

It belongs to the KdsA family.

It localises to the cytoplasm. It carries out the reaction D-arabinose 5-phosphate + phosphoenolpyruvate + H2O = 3-deoxy-alpha-D-manno-2-octulosonate-8-phosphate + phosphate. It functions in the pathway carbohydrate biosynthesis; 3-deoxy-D-manno-octulosonate biosynthesis; 3-deoxy-D-manno-octulosonate from D-ribulose 5-phosphate: step 2/3. The protein operates within bacterial outer membrane biogenesis; lipopolysaccharide biosynthesis. In Vibrio campbellii (strain ATCC BAA-1116), this protein is 2-dehydro-3-deoxyphosphooctonate aldolase.